Here is a 459-residue protein sequence, read N- to C-terminus: Transmembrane protein 143 (459 aa).

Transmembrane regions (helical) follow at residues 280 to 300 and 301 to 321; these read LLNL…GMVV and LTDL…FMGL. Residue Ser-332 is modified to Phosphoserine. Residues 435 to 459 form a disordered region; that stretch reads GFPKLDPVAPITSEPPQATPSSNIS. Residues 448-459 are compositionally biased toward polar residues; the sequence is EPPQATPSSNIS.

The protein localises to the membrane. The polypeptide is Transmembrane protein 143 (TMEM143) (Homo sapiens (Human)).